Consider the following 917-residue polypeptide: Autophagy-related protein 9 (917 aa).

Residues 1–226 lie on the Cytoplasmic side of the membrane; that stretch reads MASNIFSRLV…AGFWCIIVQR (226 aa). Disordered regions lie at residues 16–37 and 119–177; these read RSFY…RAGI and LLLS…QGRP. The helical transmembrane segment at 227 to 247 threads the bilayer; the sequence is ILELVNAAFVAVFLTFLSQCV. Residues 248-275 are Lumenal-facing; it reads DYHKLPHSKKMEDIIIPKCTQNMSLVWN. The N-linked (GlcNAc...) asparagine glycan is linked to asparagine 269. A helical membrane pass occupies residues 276-296; it reads VGLWLFAIYFICRCFGLIIQL. Over 297–442 the chain is Cytoplasmic; the sequence is RQLKHLRDFY…RQLSQKLKSR (146 aa). Residues 443-463 lie within the membrane without spanning it; the sequence is FFFAGLMIFVMSPFIALYLIL. At 464 to 539 the chain is on the cytoplasmic side; that stretch reads VYFLTYFHEF…ARTVSFITGS (76 aa). A helical membrane pass occupies residues 540–560; the sequence is IVAVLGLATIFDSEAFLTFEI. At 561-564 the chain is on the lumenal side; sequence TPDR. A helical membrane pass occupies residues 565-585; the sequence is SVLFYVSILATLWAVARGNIS. Over 586–633 the chain is Cytoplasmic; sequence DDNEVYDPEFAMKSIIEFTHYEPDHWRGRLHSTEVKNEFSELYKPRPQ. Position 621 is an N6-acetyllysine (lysine 621). Residues 634–654 lie within the membrane without spanning it; it reads IFLEEILSILLTPLVLLVSLP. At 655-917 the chain is on the cytoplasmic side; the sequence is NSTDQIVDFF…FQQAHMHLRR (263 aa). The segment at 854–895 is disordered; it reads DARFGKLGDEDIDESGGALDESTWQTSPTKTLSRENSGANPQ. Polar residues predominate over residues 875–895; the sequence is STWQTSPTKTLSRENSGANPQ.

This sequence belongs to the ATG9 family. As to quaternary structure, homotrimer; forms a homotrimer with a central pore that forms a path between the two membrane leaflets. Interacts with HAT1. In terms of processing, acetylated by HAT1 at Lys-621, which increases the ability to bind vesicles during nutrient starvation induction. Post-translationally, phosphorylated by ATG1. ATG1 phosphorylation is required for preautophagosome elongation.

It is found in the preautophagosomal structure membrane. The protein resides in the cytoplasmic vesicle membrane. The protein localises to the vacuole membrane. Its subcellular location is the golgi apparatus membrane. It localises to the endoplasmic reticulum membrane. It catalyses the reaction a 1,2-diacyl-sn-glycero-3-phosphocholine(in) = a 1,2-diacyl-sn-glycero-3-phosphocholine(out). It carries out the reaction a 1,2-diacyl-sn-glycero-3-phospho-L-serine(in) = a 1,2-diacyl-sn-glycero-3-phospho-L-serine(out). The catalysed reaction is a 1,2-diacyl-sn-glycero-3-phosphoethanolamine(in) = a 1,2-diacyl-sn-glycero-3-phosphoethanolamine(out). The enzyme catalyses a 1,2-diacyl-sn-glycero-3-phospho-(1D-myo-inositol-3-phosphate)(in) = a 1,2-diacyl-sn-glycero-3-phospho-(1D-myo-inositol-3-phosphate)(out). Functionally, phospholipid scramblase involved in autophagy and cytoplasm to vacuole transport (Cvt) vesicle formation. Cycles between the preautophagosomal structure/phagophore assembly site (PAS) and the cytoplasmic vesicle pool and supplies membrane for the growing autophagosome. Lipid scramblase activity plays a key role in preautophagosomal structure/phagophore assembly by distributing the phospholipids that arrive through ATG2 from the cytoplasmic to the luminal leaflet of the bilayer, thereby driving autophagosomal membrane expansion. Required for mitophagy. Also involved in endoplasmic reticulum-specific autophagic process and is essential for the survival of cells subjected to severe ER stress. Different machineries are required for anterograde trafficking to the PAS during either the Cvt pathway or bulk autophagy and for retrograde trafficking. Plays a role in appressorium formation and pathogenicity. This chain is Autophagy-related protein 9, found in Pyricularia oryzae (strain 70-15 / ATCC MYA-4617 / FGSC 8958) (Rice blast fungus).